Reading from the N-terminus, the 171-residue chain is Terminase, small subunit (171 aa).

It belongs to the P23virus small terminase family. Homononamer; forms a ring-like structure through which genomic DNA is translocated into the capsid. Heterodimer with the terminase large subunit; the active complex is probably heterooligomeric.

Its function is as follows. The terminase small subunit binds to the packaging initiation site and regulates the ATPase activity of the terminase large subunit. The terminase lies at a unique vertex of the procapsid and is composed of two subunits, a small terminase subunit involved in viral DNA recognition (packaging sequence), and a large terminase subunit. Both terminase subunits heterooligomerize and are docked on the portal protein to form the packaging machine. The chain is Terminase, small subunit from Thermus virus P23-45 (Thermus thermophilus phage P23-45).